Consider the following 602-residue polypeptide: UPF0329 protein ECU02_0060 (602 aa).

Residues 313–345 show a composition bias toward basic and acidic residues; the sequence is EEDERKRAEAESARNREELLRMEEREKGKEKGS. Residues 313 to 407 form a disordered region; the sequence is EEDERKRAEA…SPKEESKGEE (95 aa). Residues 346–356 are compositionally biased toward basic residues; that stretch reads KGKGRKKRGKK. Residues 357 to 369 are compositionally biased toward basic and acidic residues; sequence GAGEAKEESKEED. Over residues 370-384 the composition is skewed to acidic residues; the sequence is RGGEEEESVEADVPV.

Belongs to the UPF0329 family.

The chain is UPF0329 protein ECU02_0060 from Encephalitozoon cuniculi (strain GB-M1) (Microsporidian parasite).